A 471-amino-acid polypeptide reads, in one-letter code: V-type ATP synthase beta chain (471 aa).

Belongs to the ATPase alpha/beta chains family.

Produces ATP from ADP in the presence of a proton gradient across the membrane. The V-type beta chain is a regulatory subunit. In Deinococcus radiodurans (strain ATCC 13939 / DSM 20539 / JCM 16871 / CCUG 27074 / LMG 4051 / NBRC 15346 / NCIMB 9279 / VKM B-1422 / R1), this protein is V-type ATP synthase beta chain (atpB).